A 221-amino-acid chain; its full sequence is Leucyl/phenylalanyl-tRNA--protein transferase (221 aa).

It belongs to the L/F-transferase family.

The protein resides in the cytoplasm. It catalyses the reaction N-terminal L-lysyl-[protein] + L-leucyl-tRNA(Leu) = N-terminal L-leucyl-L-lysyl-[protein] + tRNA(Leu) + H(+). The catalysed reaction is N-terminal L-arginyl-[protein] + L-leucyl-tRNA(Leu) = N-terminal L-leucyl-L-arginyl-[protein] + tRNA(Leu) + H(+). The enzyme catalyses L-phenylalanyl-tRNA(Phe) + an N-terminal L-alpha-aminoacyl-[protein] = an N-terminal L-phenylalanyl-L-alpha-aminoacyl-[protein] + tRNA(Phe). In terms of biological role, functions in the N-end rule pathway of protein degradation where it conjugates Leu, Phe and, less efficiently, Met from aminoacyl-tRNAs to the N-termini of proteins containing an N-terminal arginine or lysine. In Phenylobacterium zucineum (strain HLK1), this protein is Leucyl/phenylalanyl-tRNA--protein transferase.